Here is a 918-residue protein sequence, read N- to C-terminus: uncharacterized protein (918 aa).

7 disordered regions span residues Ala66–Gly150, Gly226–Phe283, Ala326–Asn481, Ala515–Leu548, Glu594–Lys707, Asn737–Thr774, and His800–Met918. The span at Gln79–Ser89 shows a compositional bias: low complexity. Positions Asn103–Ser127 are enriched in basic and acidic residues. Residues Ser270–Ala281 show a composition bias toward low complexity. 3 stretches are compositionally biased toward polar residues: residues Ala326–Leu354, Lys363–Asp372, and Ala379–Glu404. Residues Ser430–Ser441 show a composition bias toward low complexity. The span at Ala515–Lys533 shows a compositional bias: basic and acidic residues. 2 stretches are compositionally biased toward polar residues: residues Gly534–Gly545 and Val604–Ser619. Low complexity predominate over residues Ser632–Asp647. Positions Val648 to Glu660 are enriched in basic and acidic residues. A compositionally biased stretch (polar residues) spans Ser661–Ser672. Over residues Glu673–Asn688 the composition is skewed to basic and acidic residues. Residues Ala689–Lys702 show a composition bias toward polar residues. Basic and acidic residues-rich tracts occupy residues His738–His765, His800–His814, Glu830–Gln846, and Leu883–Met918.

This is an uncharacterized protein from Caenorhabditis elegans.